The chain runs to 521 residues: Acidic amino acid decarboxylase GADL1 (521 aa).

Lys333 carries the N6-(pyridoxal phosphate)lysine modification.

The protein belongs to the group II decarboxylase family. Homodimer. The cofactor is pyridoxal 5'-phosphate. In terms of tissue distribution, expressed very weakly in neurons and not detected in astrocytes, brain or liver.

It carries out the reaction L-aspartate + H(+) = beta-alanine + CO2. It catalyses the reaction 3-sulfino-L-alanine + H(+) = hypotaurine + CO2. The enzyme catalyses L-cysteate + H(+) = taurine + CO2. Its function is as follows. May catalyze the decarboxylation of L-aspartate, 3-sulfino-L-alanine (cysteine sulfinic acid), and L-cysteate to beta-alanine, hypotaurine and taurine, respectively. Does not exhibit any decarboxylation activity toward glutamate. This is Acidic amino acid decarboxylase GADL1 (GADL1) from Homo sapiens (Human).